Consider the following 383-residue polypeptide: Sphingosine kinase 1 (383 aa).

One can recognise a DAGKc domain in the interval 12–159; that stretch reads PRPCRVLVLL…MNLLSLHTAS (148 aa). Residues 22–24 and 54–58 contribute to the ATP site; these read NPR and TERQN. 79–82 is a binding site for substrate; it reads SGDG. D81 acts as the Proton donor/acceptor in catalysis. ATP-binding positions include E86 and 111 to 113; that span reads GSG. 2 short sequence motifs (nuclear export signal) span residues 147–155 and 161–169; these read LSPMNLLSL and RQLYSVLSL. Substrate is bound at residue D178. Residues R185 and R191 each coordinate ATP. At T193 the chain carries Phosphothreonine. A Phosphoserine modification is found at S225. 340–342 is a binding site for ATP; sequence DGE. Residues 363–383 form a disordered region; it reads GSSDSPSGRDSQRRPPPEEPI. The span at 372-383 shows a compositional bias: basic and acidic residues; that stretch reads DSQRRPPPEEPI.

As to quaternary structure, interacts with ACY1. Binds to calmodulin. Interacts with SPHKAP. Interacts with CIB1, the interaction occurs in a calcium-dependent manner. Interacts with TRAF2. Interacts with EEF1A1; the interaction enhances SPHK1 kinase activity. Mg(2+) serves as cofactor. In terms of tissue distribution, expressed in microglia (at protein level).

The protein resides in the cytoplasm. It localises to the nucleus. It is found in the cell membrane. Its subcellular location is the endosome membrane. The protein localises to the membrane. The protein resides in the clathrin-coated pit. It localises to the synapse. The enzyme catalyses a sphingoid base + ATP = a sphingoid 1-phosphate + ADP + H(+). It catalyses the reaction L-seryl-[protein] + acetyl-CoA = O-acetyl-L-seryl-[protein] + CoA. It carries out the reaction sphinganine + ATP = sphinganine 1-phosphate + ADP + H(+). The catalysed reaction is sphing-4-enine + ATP = sphing-4-enine 1-phosphate + ADP + H(+). The enzyme catalyses 1-O-hexadecyl-2-amino-sn-glycerol + ATP = 1-O-hexadecyl-2-desoxy-2-amino-sn-glycero-3-phosphate + ADP + H(+). Its activity is regulated as follows. Acetyltransferase activity increases in presence of the kinase substrate, sphingosine. In Purkinje cells, kinase activity on sphingosine increases in presence of VEGFA. In neurons, kinase activity increases during the first 24h in presence of Amyloid-beta protein 42 to decrease after 96h. Its function is as follows. Catalyzes the phosphorylation of sphingosine to form sphingosine 1-phosphate (SPP), a lipid mediator with both intra- and extracellular functions. Also acts on D-erythro-sphingosine and to a lesser extent sphinganine, but not other lipids, such as D,L-threo-dihydrosphingosine, N,N-dimethylsphingosine, diacylglycerol, ceramide, or phosphatidylinositol. In contrast to proapoptotic SPHK2, has a negative effect on intracellular ceramide levels, enhances cell growth and inhibits apoptosis. Involved in the regulation of inflammatory response and neuroinflammation. Via the product sphingosine 1-phosphate, stimulates TRAF2 E3 ubiquitin ligase activity, and promotes activation of NF-kappa-B in response to TNF signaling leading to IL17 secretion. In response to TNF and in parallel to NF-kappa-B activation, negatively regulates RANTES induction through p38 MAPK signaling pathway. Involved in endocytic membrane trafficking induced by sphingosine, recruited to dilate endosomes, also plays a role on later stages of endosomal maturation and membrane fusion independently of its kinase activity. In Purkinje cells, seems to be also involved in the regulation of autophagosome-lysosome fusion upon VEGFA. Has serine acetyltransferase activity on PTGS2/COX2 in an acetyl-CoA dependent manner. The acetyltransferase activity increases in presence of the kinase substrate, sphingosine. During neuroinflammation, through PTGS2 acetylation, promotes neuronal secretion of specialized preresolving mediators (SPMs), especially 15-R-lipoxin A4, which results in an increase of phagocytic microglia. The sequence is that of Sphingosine kinase 1 (Sphk1) from Rattus norvegicus (Rat).